The following is a 143-amino-acid chain: UPF0251 protein CA_C3166 (143 aa).

The protein belongs to the UPF0251 family.

This Clostridium acetobutylicum (strain ATCC 824 / DSM 792 / JCM 1419 / IAM 19013 / LMG 5710 / NBRC 13948 / NRRL B-527 / VKM B-1787 / 2291 / W) protein is UPF0251 protein CA_C3166.